The primary structure comprises 255 residues: Kallikrein-4 (255 aa).

An N-terminal signal peptide occupies residues 1–25; sequence MMVTARTPWGWFLGCLILEVTGASA. A propeptide spanning residues 26 to 31 is cleaved from the precursor; sequence SSVSSR. In terms of domain architecture, Peptidase S1 spans 32 to 253; the sequence is IIQGQDCSPH…FTNWIQTIIQ (222 aa). H41 provides a ligand contact to Zn(2+). C57 and C73 are disulfide-bonded. H72 acts as the Charge relay system in catalysis. E92 contacts Zn(2+). The active-site Charge relay system is the D117. 2 N-linked (GlcNAc...) asparagine glycosylation sites follow: N124 and N170. Disulfide bonds link C149–C214, C179–C193, and C204–C229. S208 serves as the catalytic Charge relay system.

This sequence belongs to the peptidase S1 family. Kallikrein subfamily. N-glycosylated. The N-glycan structures are of complex diantennary or triantennary type, which may be further modified with up to 2 sialic acid residues.

The protein localises to the secreted. Functionally, has a major role in enamel formation. Required during the maturation stage of tooth development for clearance of enamel proteins and normal structural patterning of the crystalline matrix. In Mus musculus (Mouse), this protein is Kallikrein-4.